A 244-amino-acid polypeptide reads, in one-letter code: Rho-related GTP-binding protein RhoE (244 aa).

30–37 contacts GTP; the sequence is GDSQCGKT. Residues 52 to 60 carry the Effector region motif; sequence YVPTVFENY. Residues 77–81 and 135–138 contribute to the GTP site; these read DTSGS and CKSD. Cysteine 241 is subject to Cysteine methyl ester. The S-farnesyl cysteine moiety is linked to residue cysteine 241. Positions 242-244 are cleaved as a propeptide — removed in mature form; sequence TVM.

The protein belongs to the small GTPase superfamily. Rho family. Binds ROCK1. Interacts with UBXD5. In terms of tissue distribution, ubiquitous.

The protein resides in the golgi apparatus membrane. Its function is as follows. Binds GTP but lacks intrinsic GTPase activity and is resistant to Rho-specific GTPase-activating proteins. This Homo sapiens (Human) protein is Rho-related GTP-binding protein RhoE (RND3).